A 181-amino-acid polypeptide reads, in one-letter code: Ferritin heavy chain (181 aa).

The 150-residue stretch at 10-159 (QNYHQDCEAA…DHVTNLRKMG (150 aa)) folds into the Ferritin-like diiron domain. 5 residues coordinate Fe cation: Glu27, Glu62, His65, Glu107, and Gln141.

It belongs to the ferritin family. As to quaternary structure, oligomer of 24 subunits. There are two types of subunits: L (light) chain and H (heavy) chain. The major chain can be light or heavy, depending on the species and tissue type. The functional molecule forms a roughly spherical shell with a diameter of 12 nm and contains a central cavity into which the insoluble mineral iron core is deposited. In terms of tissue distribution, expressed in erythroblasts (at protein level). Expressed in heart, liver, spleen, lung, kidney, large intestine, small intestine, muscle, glandular stomach, ovary and oviduct.

The protein localises to the cytoplasm. It localises to the lysosome. The protein resides in the cytoplasmic vesicle. Its subcellular location is the autophagosome. It carries out the reaction 4 Fe(2+) + O2 + 4 H(+) = 4 Fe(3+) + 2 H2O. Its function is as follows. Stores iron in a soluble, non-toxic, readily available form. Important for iron homeostasis. Has ferroxidase activity. Iron is taken up in the ferrous form and deposited as ferric hydroxides after oxidation. Also plays a role in delivery of iron to cells. Mediates iron uptake in capsule cells of the developing kidney. Delivery to lysosomes is mediated by the cargo receptor NCOA4 for autophagic degradation and release of iron. Inhibits translation of various mRNA species in vitro. Associates with a 35S prosome-like particle that contains non-translated mRNAs in a complex with proteins. May be involved in pre-translational regulation of some mRNA. This chain is Ferritin heavy chain, found in Anas platyrhynchos (Mallard).